The sequence spans 1150 residues: Cell division cycle and apoptosis regulator protein 1 (1150 aa).

The interval 1–249 (MAQFGGQKNP…TQPQPQSLLQ (249 aa)) is interaction with AR. 2 disordered regions span residues 124 to 146 (PTAQ…QPQK) and 285 to 354 (IVSQ…SPRR). A compositionally biased stretch (low complexity) spans 134-146 (TPRSSQQQTQPQK). Residues 203 to 660 (QRIQTLPNQN…RALSSKGLKS (458 aa)) are interaction with GATA2. Basic and acidic residues-rich tracts occupy residues 293–334 (RRLD…ERSP) and 341–352 (ERSPRRERERSP). The residue at position 456 (serine 456) is a Phosphoserine. The stretch at 594–618 (KQQLVEKLQGERKEADGEQDEEEKD) forms a coiled coil. The interval 600 to 638 (KLQGERKEADGEQDEEEKDDGEAKEISTPTHWSKLDPKT) is disordered. A compositionally biased stretch (acidic residues) spans 610–621 (GEQDEEEKDDGE). Threonine 627 carries the phosphothreonine modification. The 35-residue stretch at 636–670 (PKTMKVNDLRKELESRALSSKGLKSQLIARLTKQL) folds into the SAP domain. Residue lysine 637 forms a Glycyl lysine isopeptide (Lys-Gly) (interchain with G-Cter in ubiquitin) linkage. The segment at 643–1150 (DLRKELESRA…QKSKENGASV (508 aa)) is interaction with GATA1. Threonine 667 is modified (phosphothreonine). 4 stretches are compositionally biased toward basic and acidic residues: residues 673–687 (EEQK…KSEK), 694–713 (DRKS…EEIE), 796–817 (KEDK…KKEE), and 832–855 (SGDD…KDDS). Disordered regions lie at residues 673–713 (EEQK…EEIE) and 796–915 (KEDK…EKEK). Residues serine 685 and serine 697 each carry the phosphoserine modification. A compositionally biased stretch (acidic residues) spans 856-889 (KDDDETEEDNNQDEYDPMEAEEAEDEEDDRDEEE). Threonine 861 is subject to Phosphothreonine. The segment covering 890 to 915 (MTKRDDKRDINRYCKERPSKDKEKEK) has biased composition (basic and acidic residues). A Glycyl lysine isopeptide (Lys-Gly) (interchain with G-Cter in SUMO1); alternate cross-link involves residue lysine 1012. Lysine 1012 is covalently cross-linked (Glycyl lysine isopeptide (Lys-Gly) (interchain with G-Cter in SUMO2); alternate). Residues 1033-1114 (DVGSLLQKLE…LQFENQMNKT (82 aa)) are a coiled coil. Residues lysine 1067 and lysine 1135 each participate in a glycyl lysine isopeptide (Lys-Gly) (interchain with G-Cter in SUMO2) cross-link.

As to quaternary structure, directly interacts with ESR1, NR3C1 and p53/TP53. Interacts (via N-terminus) with CALCOCO1. Interacts with MED1. Interacts with GATA1. Interacts with AR and GATA2. In terms of tissue distribution, expressed in various epithelial cancer cell lines, including breast, colon, prostate, pancreatic and leukemia. Expression is regulated by growth factors.

The protein resides in the cytoplasm. The protein localises to the perinuclear region. In terms of biological role, associates with components of the Mediator and p160 coactivator complexes that play a role as intermediaries transducing regulatory signals from upstream transcriptional activator proteins to basal transcription machinery at the core promoter. Recruited to endogenous nuclear receptor target genes in response to the appropriate hormone. Also functions as a p53 coactivator. May thus play an important role in transcriptional regulation. May be involved in apoptosis signaling in the presence of the reinoid CD437. Apoptosis induction involves sequestration of 14-3-3 protein(s) and mediated altered expression of multiple cell cycle regulatory genes including MYC, CCNB1 and CDKN1A. Plays a role in cell cycle progression and/or cell proliferation. In association with CALCOCO1 enhances GATA1- and MED1-mediated transcriptional activation from the gamma-globin promoter during erythroid differentiation of K562 erythroleukemia cells. Can act as a both a coactivator and corepressor of AR-mediated transcription. Contributes to chromatin looping and AR transcription complex assembly by stabilizing AR-GATA2 association on chromatin and facilitating MED1 and RNA polymerase II recruitment to AR-binding sites. May play an important role in the growth and tumorigenesis of prostate cancer cells. This Homo sapiens (Human) protein is Cell division cycle and apoptosis regulator protein 1 (CCAR1).